The sequence spans 525 residues: Putative ribose/galactose/methyl galactoside import ATP-binding protein (525 aa).

The segment at 1–20 (MSGSATASPPAKPDLPSSDG) is disordered. 2 consecutive ABC transporter domains span residues 33–269 (LEIS…VGRE) and 279–523 (KPAG…SGHR). Position 65–72 (65–72 (GENGAGKS)) interacts with ATP.

It belongs to the ABC transporter superfamily. Carbohydrate importer 2 (CUT2) (TC 3.A.1.2) family.

The protein resides in the cell inner membrane. The enzyme catalyses D-ribose(out) + ATP + H2O = D-ribose(in) + ADP + phosphate + H(+). It catalyses the reaction D-galactose(out) + ATP + H2O = D-galactose(in) + ADP + phosphate + H(+). Part of an ABC transporter complex involved in carbohydrate import. Could be involved in ribose, galactose and/or methyl galactoside import. Responsible for energy coupling to the transport system. This Pseudomonas syringae pv. tomato (strain ATCC BAA-871 / DC3000) protein is Putative ribose/galactose/methyl galactoside import ATP-binding protein.